A 167-amino-acid polypeptide reads, in one-letter code: Transmembrane protein 229B (167 aa).

Over 1 to 14 the chain is Cytoplasmic; the sequence is MASAEPLTALSRWY. A helical transmembrane segment spans residues 15–35; the sequence is LYAIHGYFCEVMFTAAWEFVV. Residues 36 to 40 are Extracellular-facing; sequence NLNWK. A helical membrane pass occupies residues 41–61; sequence FPGVTSVWALFIYGTSILIVE. Residues 62-73 lie on the Cytoplasmic side of the membrane; it reads RMYLRLRGRCPL. A helical membrane pass occupies residues 74–94; that stretch reads LLRCLIYTLWTYLWEFTTGFI. At 95–109 the chain is on the extracellular side; it reads LRQFNACPWDYSQFD. The chain crosses the membrane as a helical span at residues 110–130; the sequence is FDFMGLITLEYAVPWFCGALI. The Cytoplasmic segment spans residues 131–167; it reads MEQFIIRNTLRLRFDKDAEPGEPSGALALANGHVKTD.

It belongs to the TMEM229 family.

It localises to the membrane. The polypeptide is Transmembrane protein 229B (TMEM229B) (Homo sapiens (Human)).